The sequence spans 1021 residues: Receptor-like protein EIX2 (1021 aa).

An N-terminal signal peptide occupies residues 1 to 24 (MGKRTNPRHFLVTWSLLLLETAFG). The segment at 25-109 (LTSREVNKTL…PILTGKVSPS (85 aa)) is N-cap. The Extracellular segment spans residues 25-963 (LTSREVNKTL…DDDDEFSSLE (939 aa)). A glycan (N-linked (GlcNAc...) asparagine) is linked at Asn31. LRR repeat units follow at residues 113–136 (LEYLNFLDLSVNGFENSEIPRFIG), 138–161 (LKRLEYLNLSSSDFSGEIPAQFQN), 162–184 (LTSLRILDLGNNNLIVKDLVWLS), 186–211 (LSSLEFLRLGGNDFQARNWFREITKV), 214–237 (LKELDLSVCGLSKFVPSPADVANS), and 239–262 (LISLSVLHLCCNEFSTSSEYSWLF). N-linked (GlcNAc...) asparagine glycosylation is found at Asn145 and Asn161. N-linked (GlcNAc...) asparagine glycosylation occurs at Asn236. N-linked (GlcNAc...) asparagine glycosylation is present at Asn263. LRR repeat units follow at residues 265-288 (STSLTSIDLSHNQLSRQIDDRFGS), 290-313 (MYLEHLNLANNFGAEGGVPSSFGN), 314-337 (LTRLHYLDMSNTQTYQWLPELFLR), 342-365 (RKSLEVLGLNDNSLFGSIVNVTRF), 366-388 (SSLKKLYLQKNMLNGFFMERVGQ), 389-412 (VSSLEYLDLSDNQMRGPLPDLALF), 413-436 (PSLRELHLGSNQFQGRIPQGIGKL), 437-459 (SQLRIFDVSSNRLEGLPESMGQL), 461-483 (NLERFDASYNVLKGTITESHFSN), 484-507 (LSSLVDLDLSFNLLSLNTRFDWVP), 509-532 (FQLQFIRLPSCNMGPSFPKWLQTQ), 533-555 (NNYTLLDISLANISDMLPSWFSN), 557-581 (PPELKILNLSNNHISGRVSEFIVSK), and 583-607 (DYMIIDLSSNNFSGHLPLVPANIQI). Asn313 is a glycosylation site (N-linked (GlcNAc...) asparagine). Residue Asn483 is glycosylated (N-linked (GlcNAc...) asparagine). 4 N-linked (GlcNAc...) asparagine glycosylation sites follow: Asn534, Asn544, Asn564, and Asn593. One copy of the LRR 21; degenerate repeat lies at 608 to 626 (FYLHKNHFSGSISSICRNT). LRR repeat units lie at residues 627–651 (IGAATSIDLSRNQFSGEVPDCWMNM), 652–675 (SNLAVLNLAYNNFSGKVPQSLGSL), 677–698 (NLEALYIRQNSFRGMLPSFSQC), 699–722 (QLLQILDIGGNKLTGRIPAWIGTD), 723–747 (LLQLRILSLRSNKFDGSIPSLICQL), and 749–773 (FLQILDLSENGLSGKIPQCLNNFTI). 2 N-linked (GlcNAc...) asparagine glycosylation sites follow: Asn650 and Asn663. 2 N-linked (GlcNAc...) asparagine glycosylation sites follow: Asn770 and Asn778. 4 LRR repeats span residues 818 to 842 (LLYLKIIDLSSNKLVGGIPKEIAEM), 843 to 866 (RGLRSLNLSRNDLNGTVVEGIGQM), 867 to 890 (KLLESLDLSRNQLSGMIPQGLSNL), and 892 to 913 (FLSVLDLSNNHLSGRIPSSTQL). N-linked (GlcNAc...) asparagine glycosylation is found at Asn849, Asn856, and Asn889. A C-cap/acidic domain region spans residues 914 to 963 (QSFDRSSYSGNAQLCGPPLEECPGYAPPIDRGSNTNPQEHDDDDEFSSLE). The helical transmembrane segment at 964-984 (FYVSMVLGFFVTFWGILGCLI) threads the bilayer. Over 985-1021 (VNRSWRNAYFTFLTDMKSWLHMTSRVCFARLKGKLRN) the chain is Cytoplasmic.

It belongs to the RLP family. Interacts with EIX elicitor protein.

It localises to the cell membrane. Its function is as follows. Involved in plant defense. Confers resistance to the fungal pathogen T.viride through recognition of the EIX elicitor protein. This Solanum lycopersicum (Tomato) protein is Receptor-like protein EIX2.